A 159-amino-acid polypeptide reads, in one-letter code: SsrA-binding protein (159 aa).

Positions 131-159 (KGKKLHDKRESEKERDWNRQKSRLLKDNG) are disordered. Positions 137–159 (DKRESEKERDWNRQKSRLLKDNG) are enriched in basic and acidic residues.

This sequence belongs to the SmpB family.

It is found in the cytoplasm. In terms of biological role, required for rescue of stalled ribosomes mediated by trans-translation. Binds to transfer-messenger RNA (tmRNA), required for stable association of tmRNA with ribosomes. tmRNA and SmpB together mimic tRNA shape, replacing the anticodon stem-loop with SmpB. tmRNA is encoded by the ssrA gene; the 2 termini fold to resemble tRNA(Ala) and it encodes a 'tag peptide', a short internal open reading frame. During trans-translation Ala-aminoacylated tmRNA acts like a tRNA, entering the A-site of stalled ribosomes, displacing the stalled mRNA. The ribosome then switches to translate the ORF on the tmRNA; the nascent peptide is terminated with the 'tag peptide' encoded by the tmRNA and targeted for degradation. The ribosome is freed to recommence translation, which seems to be the essential function of trans-translation. The sequence is that of SsrA-binding protein from Rhizobium etli (strain CIAT 652).